We begin with the raw amino-acid sequence, 508 residues long: GMP synthase [glutamine-hydrolyzing] (508 aa).

Residues 1–189 (MIVVLDFGSQ…ALLVCGCEKT (189 aa)) form the Glutamine amidotransferase type-1 domain. Catalysis depends on C78, which acts as the Nucleophile. Active-site residues include H163 and E165. Positions 190 to 383 (WGMQNFAQKE…LGVSQDFLMR (194 aa)) constitute a GMPS ATP-PPase domain. ATP is bound at residue 217-223 (SGGVDST).

As to quaternary structure, homodimer.

It carries out the reaction XMP + L-glutamine + ATP + H2O = GMP + L-glutamate + AMP + diphosphate + 2 H(+). It participates in purine metabolism; GMP biosynthesis; GMP from XMP (L-Gln route): step 1/1. Its function is as follows. Catalyzes the synthesis of GMP from XMP. The chain is GMP synthase [glutamine-hydrolyzing] from Helicobacter acinonychis (strain Sheeba).